Reading from the N-terminus, the 225-residue chain is 7-cyano-7-deazaguanine synthase (225 aa).

9-19 (LSGGLDSATCL) serves as a coordination point for ATP. Residues cysteine 189, cysteine 199, cysteine 202, and cysteine 205 each coordinate Zn(2+).

The protein belongs to the QueC family. Zn(2+) serves as cofactor.

It catalyses the reaction 7-carboxy-7-deazaguanine + NH4(+) + ATP = 7-cyano-7-deazaguanine + ADP + phosphate + H2O + H(+). It participates in purine metabolism; 7-cyano-7-deazaguanine biosynthesis. In terms of biological role, catalyzes the ATP-dependent conversion of 7-carboxy-7-deazaguanine (CDG) to 7-cyano-7-deazaguanine (preQ(0)). This chain is 7-cyano-7-deazaguanine synthase, found in Dechloromonas aromatica (strain RCB).